The primary structure comprises 524 residues: Adhesion G-protein coupled receptor G5 (524 aa).

Positions Met1–Thr23 are cleaved as a signal peptide. Over Leu24–Tyr246 the chain is Extracellular. N-linked (GlcNAc...) asparagine glycosylation is found at Asn58, Asn65, Asn96, Asn143, Asn169, and Asn175. The 162-residue stretch at Gln74–Pro235 folds into the GAIN-B domain. 2 disulfides stabilise this stretch: Cys185–Cys217 and Cys205–Cys219. The segment at Cys185–Pro235 is GPS. The stachel stretch occupies residues Tyr224–Ser232. The helical transmembrane segment at Ile247–Ala267 threads the bilayer. Residues Gln268 to Asn284 lie on the Cytoplasmic side of the membrane. The helical transmembrane segment at Gly285–Met305 threads the bilayer. Over Pro306–Tyr319 the chain is Extracellular. Residues Cys310 and Cys400 are joined by a disulfide bond. A helical transmembrane segment spans residues Ala320 to Gly340. At Arg341 to Leu351 the chain is on the cytoplasmic side. Residues Leu352–Ile372 form a helical membrane-spanning segment. The Extracellular portion of the chain corresponds to Lys373–Met413. Residues Asn390 and Asn396 are each glycosylated (N-linked (GlcNAc...) asparagine). A helical membrane pass occupies residues Gly414 to Leu434. The Cytoplasmic portion of the chain corresponds to Cys435–Ala453. The helical transmembrane segment at Met454–Phe476 threads the bilayer. At Leu477–Gln480 the chain is on the extracellular side. The helical transmembrane segment at Leu481–Cys500 threads the bilayer. Residues Ser501–His524 are Cytoplasmic-facing.

This sequence belongs to the G-protein coupled receptor 2 family. Adhesion G-protein coupled receptor (ADGR) subfamily. As to quaternary structure, heterodimer of 2 chains generated by proteolytic processing; the large extracellular N-terminal fragment and the membrane-bound C-terminal fragment predominantly remain associated and non-covalently linked. Post-translationally, autoproteolytically processed at the GPS region of the GAIN-B domain; this cleavage modulates receptor activity. As to expression, expressed at least in kidney, heart, brain and spleen. Isoform 1 is predominant in spleen. In the kidney, both isoform 1 and isoform 2 are expressed at similar levels. In terms of tissue distribution, isoform 2 is the major form in heart and brain. In the kidney, both isoform 1 and isoform 2 are expressed at similar levels.

It is found in the cell membrane. Forms a heterodimer of 2 chains generated by proteolytic processing that remain associated through non-covalent interactions mediated by the GAIN-B domain. In the inactivated receptor, the Stachel sequence (also named stalk) is embedded in the GAIN-B domain, where it adopts a beta-strand conformation. On activation, the Stachel moves into the 7 transmembrane region and adopts a twisted hook-shaped configuration that forms contacts within the receptor, leading to coupling of a G-alpha protein, which activates signaling. The cleaved GAIN-B and N-terminal domains can then dissociate from the rest of the receptor. Its function is as follows. Orphan adhesion G-protein coupled receptor (aGPCR). Ligand binding causes a conformation change that triggers signaling via guanine nucleotide-binding proteins (G proteins) and modulates the activity of downstream effectors, such as adenylate cyclase. ADGRG5 is specifically coupled to G(s) G proteins and mediates activation of adenylate cyclase activity. Functionally, isoform 1, but not isoform 2, is constitutively active, as evidenced by elevated basal cAMP levels, and responds to mechanical activation (shaking). This chain is Adhesion G-protein coupled receptor G5, found in Mus musculus (Mouse).